The primary structure comprises 118 residues: Large ribosomal subunit protein bL20 (118 aa).

Belongs to the bacterial ribosomal protein bL20 family.

Functionally, binds directly to 23S ribosomal RNA and is necessary for the in vitro assembly process of the 50S ribosomal subunit. It is not involved in the protein synthesizing functions of that subunit. The chain is Large ribosomal subunit protein bL20 from Yersinia pseudotuberculosis serotype O:1b (strain IP 31758).